Here is a 342-residue protein sequence, read N- to C-terminus: Farnesyl pyrophosphate synthase 1 (342 aa).

The isopentenyl diphosphate site is built by Lys-48, Arg-51, and Gln-86. Mg(2+)-binding residues include Asp-93 and Asp-97. A dimethylallyl diphosphate-binding site is contributed by Arg-102. Arg-103 contacts isopentenyl diphosphate. Residues Lys-190, Thr-191, Gln-229, Lys-246, and Lys-255 each coordinate dimethylallyl diphosphate.

It belongs to the FPP/GGPP synthase family. Mg(2+) is required as a cofactor.

The protein resides in the cytoplasm. It carries out the reaction isopentenyl diphosphate + dimethylallyl diphosphate = (2E)-geranyl diphosphate + diphosphate. It catalyses the reaction isopentenyl diphosphate + (2E)-geranyl diphosphate = (2E,6E)-farnesyl diphosphate + diphosphate. The protein operates within isoprenoid biosynthesis; farnesyl diphosphate biosynthesis; farnesyl diphosphate from geranyl diphosphate and isopentenyl diphosphate: step 1/1. It functions in the pathway isoprenoid biosynthesis; geranyl diphosphate biosynthesis; geranyl diphosphate from dimethylallyl diphosphate and isopentenyl diphosphate: step 1/1. Catalyzes the sequential condensation of isopentenyl pyrophosphate with the allylic pyrophosphates, dimethylallyl pyrophosphate, and then with the resultant geranylpyrophosphate to the ultimate product farnesyl pyrophosphate. The protein is Farnesyl pyrophosphate synthase 1 (FPS1) of Parthenium argentatum (Guayule rubber plant).